The sequence spans 80 residues: ATP synthase subunit c (80 aa).

A run of 2 helical transmembrane segments spans residues 11-31 and 53-73; these read IAAA…IGIL and FFIV…LGLY.

It belongs to the ATPase C chain family. As to quaternary structure, F-type ATPases have 2 components, F(1) - the catalytic core - and F(0) - the membrane proton channel. F(1) has five subunits: alpha(3), beta(3), gamma(1), delta(1), epsilon(1). F(0) has three main subunits: a(1), b(2) and c(10-14). The alpha and beta chains form an alternating ring which encloses part of the gamma chain. F(1) is attached to F(0) by a central stalk formed by the gamma and epsilon chains, while a peripheral stalk is formed by the delta and b chains.

It is found in the cell inner membrane. In terms of biological role, f(1)F(0) ATP synthase produces ATP from ADP in the presence of a proton or sodium gradient. F-type ATPases consist of two structural domains, F(1) containing the extramembraneous catalytic core and F(0) containing the membrane proton channel, linked together by a central stalk and a peripheral stalk. During catalysis, ATP synthesis in the catalytic domain of F(1) is coupled via a rotary mechanism of the central stalk subunits to proton translocation. Key component of the F(0) channel; it plays a direct role in translocation across the membrane. A homomeric c-ring of between 10-14 subunits forms the central stalk rotor element with the F(1) delta and epsilon subunits. In Aeromonas hydrophila subsp. hydrophila (strain ATCC 7966 / DSM 30187 / BCRC 13018 / CCUG 14551 / JCM 1027 / KCTC 2358 / NCIMB 9240 / NCTC 8049), this protein is ATP synthase subunit c.